The primary structure comprises 730 residues: Catalase-peroxidase (730 aa).

Residues 95 to 218 (WHSAGTYRVG…LAAVQMGLIY (124 aa)) constitute a cross-link (tryptophyl-tyrosyl-methioninium (Trp-Tyr) (with M-244)). Histidine 96 functions as the Proton acceptor in the catalytic mechanism. Positions 218–244 (YVNPEGPNGNPDPLGSAHDVRETFARM) form a cross-link, tryptophyl-tyrosyl-methioninium (Tyr-Met) (with W-95). Residue histidine 259 coordinates heme b.

It belongs to the peroxidase family. Peroxidase/catalase subfamily. Homodimer or homotetramer. Heme b is required as a cofactor. In terms of processing, formation of the three residue Trp-Tyr-Met cross-link is important for the catalase, but not the peroxidase activity of the enzyme.

It catalyses the reaction H2O2 + AH2 = A + 2 H2O. It carries out the reaction 2 H2O2 = O2 + 2 H2O. Bifunctional enzyme with both catalase and broad-spectrum peroxidase activity. The polypeptide is Catalase-peroxidase (Clostridium botulinum (strain Eklund 17B / Type B)).